The following is a 244-amino-acid chain: Myosin-7 (244 aa).

Residues 1–244 (VEQTERSRKL…DIGTKGLNEE (244 aa)) form a rodlike tail (S2 and LMM domains) region. The stretch at 1 to 244 (VEQTERSRKL…DIGTKGLNEE (244 aa)) forms a coiled coil. Residues 216 to 244 (EERADIAESQVNKLRAKSRDIGTKGLNEE) are disordered. Positions 232–244 (KSRDIGTKGLNEE) are enriched in basic and acidic residues.

In terms of assembly, muscle myosin is a hexameric protein that consists of 2 heavy chain subunits (MHC), 2 alkali light chain subunits (MLC) and 2 regulatory light chain subunits (MLC-2). Interacts with ECPAS. Interacts (via C-terminus) with LRRC39.

Its subcellular location is the cytoplasm. It is found in the myofibril. The protein resides in the sarcomere. Functionally, myosins are actin-based motor molecules with ATPase activity essential for muscle contraction. Forms regular bipolar thick filaments that, together with actin thin filaments, constitute the fundamental contractile unit of skeletal and cardiac muscle. The protein is Myosin-7 (MYH7) of Papio hamadryas (Hamadryas baboon).